Here is a 306-residue protein sequence, read N- to C-terminus: Agmatinase (306 aa).

Mn(2+)-binding residues include H126, D149, H151, D153, D230, and D232.

It belongs to the arginase family. Agmatinase subfamily. Mn(2+) is required as a cofactor.

It catalyses the reaction agmatine + H2O = urea + putrescine. It functions in the pathway amine and polyamine biosynthesis; putrescine biosynthesis via agmatine pathway; putrescine from agmatine: step 1/1. In terms of biological role, catalyzes the formation of putrescine from agmatine. This is Agmatinase from Salmonella agona (strain SL483).